The primary structure comprises 196 residues: UPF0215 protein MM_1007 (196 aa).

Belongs to the UPF0215 family.

The sequence is that of UPF0215 protein MM_1007 from Methanosarcina mazei (strain ATCC BAA-159 / DSM 3647 / Goe1 / Go1 / JCM 11833 / OCM 88) (Methanosarcina frisia).